The sequence spans 100 residues: Large ribosomal subunit protein uL23 (100 aa).

Belongs to the universal ribosomal protein uL23 family. As to quaternary structure, part of the 50S ribosomal subunit. Contacts protein L29, and trigger factor when it is bound to the ribosome.

Its function is as follows. One of the early assembly proteins it binds 23S rRNA. One of the proteins that surrounds the polypeptide exit tunnel on the outside of the ribosome. Forms the main docking site for trigger factor binding to the ribosome. The polypeptide is Large ribosomal subunit protein uL23 (Lacticaseibacillus casei (strain BL23) (Lactobacillus casei)).